We begin with the raw amino-acid sequence, 379 residues long: Cytochrome b (379 aa).

4 helical membrane-spanning segments follow: residues 33–53 (FGSL…FLAM), 77–98 (WLIR…YLHI), 113–133 (WNIG…GYVL), and 178–198 (FFAF…LHLL). Heme b is bound by residues His-83 and His-97. His-182 and His-196 together coordinate heme b. His-201 contacts a ubiquinone. 4 consecutive transmembrane segments (helical) span residues 226-246 (YKDL…ALFY), 288-308 (LGGV…PILH), 320-340 (ASQL…WIGG), and 347-367 (YIII…VLNP).

The protein belongs to the cytochrome b family. The cytochrome bc1 complex contains 3 respiratory subunits (MT-CYB, CYC1 and UQCRFS1), 2 core proteins (UQCRC1 and UQCRC2) and probably 6 low-molecular weight proteins. The cofactor is heme b.

The protein resides in the mitochondrion inner membrane. In terms of biological role, component of the ubiquinol-cytochrome c reductase complex (complex III or cytochrome b-c1 complex) that is part of the mitochondrial respiratory chain. The b-c1 complex mediates electron transfer from ubiquinol to cytochrome c. Contributes to the generation of a proton gradient across the mitochondrial membrane that is then used for ATP synthesis. The sequence is that of Cytochrome b (mt-cyb) from Anguilla anguilla (European freshwater eel).